Here is a 377-residue protein sequence, read N- to C-terminus: Dihydroorotase, mitochondrial (377 aa).

Residues histidine 44, histidine 46, lysine 130, histidine 168, and histidine 206 each contribute to the Zn(2+) site. Lysine 130 carries the N6-carboxylysine modification. Position 223 is a phosphoserine (serine 223). Zn(2+) is bound at residue aspartate 280.

It belongs to the metallo-dependent hydrolases superfamily. DHOase family. Class II DHOase subfamily. The cofactor is Zn(2+).

The protein localises to the mitochondrion. It catalyses the reaction (S)-dihydroorotate + H2O = N-carbamoyl-L-aspartate + H(+). It participates in pyrimidine metabolism; UMP biosynthesis via de novo pathway; (S)-dihydroorotate from bicarbonate: step 3/3. In Arabidopsis thaliana (Mouse-ear cress), this protein is Dihydroorotase, mitochondrial (PYR4).